A 218-amino-acid chain; its full sequence is 3-dehydroquinate dehydratase (218 aa).

3-dehydroquinate is bound by residues 29–31 (EFR) and R56. H116 serves as the catalytic Proton donor/acceptor. The active-site Schiff-base intermediate with substrate is K142. 3-dehydroquinate is bound by residues R180, S200, and Q204.

This sequence belongs to the type-I 3-dehydroquinase family. Homodimer.

The enzyme catalyses 3-dehydroquinate = 3-dehydroshikimate + H2O. It participates in metabolic intermediate biosynthesis; chorismate biosynthesis; chorismate from D-erythrose 4-phosphate and phosphoenolpyruvate: step 3/7. Functionally, involved in the third step of the chorismate pathway, which leads to the biosynthesis of aromatic amino acids. Catalyzes the cis-dehydration of 3-dehydroquinate (DHQ) and introduces the first double bond of the aromatic ring to yield 3-dehydroshikimate. The protein is 3-dehydroquinate dehydratase of Methanococcus maripaludis (strain C6 / ATCC BAA-1332).